Reading from the N-terminus, the 127-residue chain is Large ribosomal subunit protein bL17 (127 aa).

The protein belongs to the bacterial ribosomal protein bL17 family. Part of the 50S ribosomal subunit. Contacts protein L32.

This Enterococcus faecalis (strain ATCC 700802 / V583) protein is Large ribosomal subunit protein bL17.